Here is a 289-residue protein sequence, read N- to C-terminus: tRNA-cytidine(32) 2-sulfurtransferase (289 aa).

The PP-loop motif signature appears at 49 to 54; that stretch reads SGGKDS. Residues Cys-124, Cys-127, and Cys-215 each coordinate [4Fe-4S] cluster.

This sequence belongs to the TtcA family. In terms of assembly, homodimer. Mg(2+) is required as a cofactor. The cofactor is [4Fe-4S] cluster.

It localises to the cytoplasm. The enzyme catalyses cytidine(32) in tRNA + S-sulfanyl-L-cysteinyl-[cysteine desulfurase] + AH2 + ATP = 2-thiocytidine(32) in tRNA + L-cysteinyl-[cysteine desulfurase] + A + AMP + diphosphate + H(+). Its pathway is tRNA modification. Functionally, catalyzes the ATP-dependent 2-thiolation of cytidine in position 32 of tRNA, to form 2-thiocytidine (s(2)C32). The sulfur atoms are provided by the cysteine/cysteine desulfurase (IscS) system. The protein is tRNA-cytidine(32) 2-sulfurtransferase of Methylococcus capsulatus (strain ATCC 33009 / NCIMB 11132 / Bath).